We begin with the raw amino-acid sequence, 48 residues long: Sperm protamine P1 (48 aa).

This sequence belongs to the protamine P1 family. In terms of tissue distribution, testis.

It localises to the nucleus. It is found in the chromosome. Its function is as follows. Protamines substitute for histones in the chromatin of sperm during the haploid phase of spermatogenesis. They compact sperm DNA into a highly condensed, stable and inactive complex. The protein is Sperm protamine P1 (PRM1) of Corynorhinus townsendii (Townsend's big-eared bat).